Reading from the N-terminus, the 253-residue chain is Chitooligosaccharide deacetylase (253 aa).

The Mg(2+) site is built by histidine 61 and histidine 126.

This sequence belongs to the YdjC deacetylase family. ChbG subfamily. In terms of assembly, homodimer. It depends on Mg(2+) as a cofactor.

It localises to the cytoplasm. The catalysed reaction is N,N'-diacetylchitobiose + H2O = N-acetyl-beta-D-glucosaminyl-(1-&gt;4)-D-glucosamine + acetate. The enzyme catalyses diacetylchitobiose-6'-phosphate + H2O = N'-monoacetylchitobiose-6'-phosphate + acetate. The protein operates within glycan degradation; chitin degradation. Its function is as follows. Involved in the degradation of chitin. ChbG is essential for growth on the acetylated chitooligosaccharides chitobiose and chitotriose but is dispensable for growth on cellobiose and chitosan dimer, the deacetylated form of chitobiose. Deacetylation of chitobiose-6-P and chitotriose-6-P is necessary for both the activation of the chb promoter by the regulatory protein ChbR and the hydrolysis of phosphorylated beta-glucosides by the phospho-beta-glucosidase ChbF. Catalyzes the removal of only one acetyl group from chitobiose-6-P to yield monoacetylchitobiose-6-P, the inducer of ChbR and the substrate of ChbF. This chain is Chitooligosaccharide deacetylase, found in Yersinia pseudotuberculosis serotype O:1b (strain IP 31758).